A 248-amino-acid chain; its full sequence is 2,3-bisphosphoglycerate-dependent phosphoglycerate mutase (248 aa).

Residues 10–17 (RHGQSQWN), 23–24 (TG), Arg62, 89–92 (ERHY), Lys100, 116–117 (RR), and 183–184 (GN) contribute to the substrate site. The active-site Tele-phosphohistidine intermediate is the His11. The active-site Proton donor/acceptor is the Glu89.

This sequence belongs to the phosphoglycerate mutase family. BPG-dependent PGAM subfamily.

It catalyses the reaction (2R)-2-phosphoglycerate = (2R)-3-phosphoglycerate. It functions in the pathway carbohydrate degradation; glycolysis; pyruvate from D-glyceraldehyde 3-phosphate: step 3/5. Its function is as follows. Catalyzes the interconversion of 2-phosphoglycerate and 3-phosphoglycerate. The chain is 2,3-bisphosphoglycerate-dependent phosphoglycerate mutase from Corynebacterium kroppenstedtii (strain DSM 44385 / JCM 11950 / CIP 105744 / CCUG 35717).